Reading from the N-terminus, the 1198-residue chain is Fibronectin type-III domain-containing protein 3A (1198 aa).

The tract at residues 160-221 is disordered; it reads YGDVDAHSTH…PSPINEHNGL (62 aa). The segment covering 163–201 has biased composition (basic and acidic residues); sequence VDAHSTHGRSNFRDERSSKTYERLQKKLKDRQGTQKDKM. Low complexity predominate over residues 202–214; sequence SSPPSSPQKCPSP. Phosphoserine is present on residues Ser-203, Ser-207, and Ser-213. Fibronectin type-III domains lie at 268–369, 373–465, 469–562, 566–660, 664–757, 761–851, 861–950, 951–1045, and 1046–1151; these read NIVK…TLSC, IPNP…TSGC, MPAS…TCPD, IPVK…TPAV, PCLP…TAPG, QCKP…TPPS, EISD…TKPL, PPDP…TPKS, and VPAA…TEPP. Lys-384 bears the N6-acetyllysine mark. The helical transmembrane segment at 1177–1197 threads the bilayer; the sequence is ILVLFAFFSILIAFIIQYFVI.

Belongs to the FNDC3 family. As to expression, expressed in the odontoblast and nerves in the dental pulp. Also expressed in trachea and to a lesser extent in the brain, liver, lung and kidney.

The protein localises to the golgi apparatus membrane. Functionally, mediates spermatid-Sertoli adhesion during spermatogenesis. The protein is Fibronectin type-III domain-containing protein 3A (FNDC3A) of Homo sapiens (Human).